The primary structure comprises 218 residues: Capsid protein (218 aa).

At methionine 1 the chain carries N-acetylmethionine; by host. The segment covering 1–10 (MDKSESTSAG) has biased composition (low complexity). The tract at residues 1–29 (MDKSESTSAGRNRRRRLRRGSRSAPSSAD) is disordered. A compositionally biased stretch (basic residues) spans 11–21 (RNRRRRLRRGS).

It belongs to the cucumovirus capsid protein family.

Its subcellular location is the virion. Its function is as follows. Capsid protein. Probably binds RNA and plays a role in packaging. In Cucumis sativus (Cucumber), this protein is Capsid protein.